The following is a 116-amino-acid chain: Large ribosomal subunit protein bL17 (116 aa).

It belongs to the bacterial ribosomal protein bL17 family. Part of the 50S ribosomal subunit. Contacts protein L32.

In Synechococcus sp. (strain CC9311), this protein is Large ribosomal subunit protein bL17.